Reading from the N-terminus, the 420-residue chain is ATP phosphoribosyltransferase regulatory subunit (420 aa).

The protein belongs to the class-II aminoacyl-tRNA synthetase family. HisZ subfamily. As to quaternary structure, heteromultimer composed of HisG and HisZ subunits.

The protein resides in the cytoplasm. It functions in the pathway amino-acid biosynthesis; L-histidine biosynthesis; L-histidine from 5-phospho-alpha-D-ribose 1-diphosphate: step 1/9. Required for the first step of histidine biosynthesis. May allow the feedback regulation of ATP phosphoribosyltransferase activity by histidine. The chain is ATP phosphoribosyltransferase regulatory subunit from Bacillus anthracis (strain A0248).